Consider the following 286-residue polypeptide: tRNA (guanine-N(1)-)-methyltransferase (286 aa).

Residues Gly116 and 140–145 contribute to the S-adenosyl-L-methionine site; that span reads IGDYVL. The interval 232 to 286 is disordered; sequence DALPPGSLTPHEEALAAEARLHAGRSAETPPPAGAAGSQAEGPPGTSPSDAAVAH.

This sequence belongs to the RNA methyltransferase TrmD family. Homodimer.

It is found in the cytoplasm. The enzyme catalyses guanosine(37) in tRNA + S-adenosyl-L-methionine = N(1)-methylguanosine(37) in tRNA + S-adenosyl-L-homocysteine + H(+). Its function is as follows. Specifically methylates guanosine-37 in various tRNAs. The sequence is that of tRNA (guanine-N(1)-)-methyltransferase from Acidothermus cellulolyticus (strain ATCC 43068 / DSM 8971 / 11B).